The primary structure comprises 268 residues: Interleukin-1 beta (268 aa).

The propeptide occupies 1–116 (MAEVPELASE…TRNNDACVHD (116 aa)).

It belongs to the IL-1 family. In terms of assembly, monomer. In its precursor form, weakly interacts with full-length MEFV; the mature cytokine does not interact at all. Interacts with integrins ITGAV:ITGBV and ITGA5:ITGB1; integrin-binding is required for IL1B signaling. Interacts with cargo receptor TMED10; the interaction is direct and is required for the secretion of IL1B mature form. Interacts with HSP90AB1; the interaction facilitates cargo translocation into the ERGIC. Interacts with HSP90B1; the interaction facilitates cargo translocation into the ERGIC.

It localises to the cytoplasm. The protein resides in the cytosol. The protein localises to the secreted. It is found in the lysosome. Its subcellular location is the extracellular exosome. Its function is as follows. Potent pro-inflammatory cytokine. Initially discovered as the major endogenous pyrogen, induces prostaglandin synthesis, neutrophil influx and activation, T-cell activation and cytokine production, B-cell activation and antibody production, and fibroblast proliferation and collagen production. Promotes Th17 differentiation of T-cells. Synergizes with IL12/interleukin-12 to induce IFNG synthesis from T-helper 1 (Th1) cells. Plays a role in angiogenesis by inducing VEGF production synergistically with TNF and IL6. Involved in transduction of inflammation downstream of pyroptosis: its mature form is specifically released in the extracellular milieu by passing through the gasdermin-D (GSDMD) pore. The sequence is that of Interleukin-1 beta (IL1B) from Macaca fascicularis (Crab-eating macaque).